A 214-amino-acid polypeptide reads, in one-letter code: Reticulon-3-A (214 aa).

The disordered stretch occupies residues 1–21 (MAETSGPQSSHISSSSVGEKG). Residues 26 to 214 (VRDLLYWRDV…LPGALKKKSE (189 aa)) enclose the Reticulon domain. 2 helical membrane-spanning segments follow: residues 46 to 66 (MVLLLSLAAFSIISVISYLVL) and 155 to 175 (VFNGITLLILGVLLTFTAPIV).

In terms of assembly, homodimer. Expressed in the animal hemisphere at the four-cell stage. During gastrulation, expression becomes restricted to the prospective neuroectoderm. At the early tail bud stage, expressed in the head structure. At the tadpole stage, expressed in head and neural tissues including the otic vesicle and optic nerve.

Its subcellular location is the endoplasmic reticulum membrane. It localises to the golgi apparatus membrane. Its function is as follows. May be involved in membrane trafficking in the early secretory pathway. This Xenopus laevis (African clawed frog) protein is Reticulon-3-A (rtn3-a).